The chain runs to 196 residues: Glycerol-3-phosphate acyltransferase (196 aa).

The next 5 membrane-spanning stretches (helical) occupy residues 4-24 (FYIM…VVLT), 53-73 (LGVL…LIAI), 78-98 (LGDA…CYPV), 114-134 (IFLV…ALLV), and 140-160 (VSLG…FTEG).

It belongs to the PlsY family. Probably interacts with PlsX.

The protein resides in the cell inner membrane. It catalyses the reaction an acyl phosphate + sn-glycerol 3-phosphate = a 1-acyl-sn-glycero-3-phosphate + phosphate. It functions in the pathway lipid metabolism; phospholipid metabolism. Its function is as follows. Catalyzes the transfer of an acyl group from acyl-phosphate (acyl-PO(4)) to glycerol-3-phosphate (G3P) to form lysophosphatidic acid (LPA). This enzyme utilizes acyl-phosphate as fatty acyl donor, but not acyl-CoA or acyl-ACP. This is Glycerol-3-phosphate acyltransferase from Syntrophotalea carbinolica (strain DSM 2380 / NBRC 103641 / GraBd1) (Pelobacter carbinolicus).